The sequence spans 101 residues: Small ribosomal subunit protein uS10 (101 aa).

This sequence belongs to the universal ribosomal protein uS10 family. In terms of assembly, part of the 30S ribosomal subunit.

Its function is as follows. Involved in the binding of tRNA to the ribosomes. This Mycobacteroides abscessus (strain ATCC 19977 / DSM 44196 / CCUG 20993 / CIP 104536 / JCM 13569 / NCTC 13031 / TMC 1543 / L948) (Mycobacterium abscessus) protein is Small ribosomal subunit protein uS10.